Here is a 138-residue protein sequence, read N- to C-terminus: Putative phosphatidylinositol 3,4,5-trisphosphate 3-phosphatase TPTE2P1 (138 aa).

Positions Met1 to Val75 constitute a C2 tensin-type domain.

The polypeptide is Putative phosphatidylinositol 3,4,5-trisphosphate 3-phosphatase TPTE2P1 (TPTE2P1) (Homo sapiens (Human)).